The primary structure comprises 485 residues: Glutamyl-tRNA(Gln) amidotransferase subunit A (485 aa).

Catalysis depends on charge relay system residues Lys79 and Ser154. The active-site Acyl-ester intermediate is Ser178.

Belongs to the amidase family. GatA subfamily. As to quaternary structure, heterotrimer of A, B and C subunits.

It catalyses the reaction L-glutamyl-tRNA(Gln) + L-glutamine + ATP + H2O = L-glutaminyl-tRNA(Gln) + L-glutamate + ADP + phosphate + H(+). Its function is as follows. Allows the formation of correctly charged Gln-tRNA(Gln) through the transamidation of misacylated Glu-tRNA(Gln) in organisms which lack glutaminyl-tRNA synthetase. The reaction takes place in the presence of glutamine and ATP through an activated gamma-phospho-Glu-tRNA(Gln). This chain is Glutamyl-tRNA(Gln) amidotransferase subunit A, found in Persephonella marina (strain DSM 14350 / EX-H1).